The following is a 4043-amino-acid chain: Polyketide synthase-nonribosomal peptide synthetase (4043 aa).

A Ketosynthase family 3 (KS3) domain is found at 8–446 (SEPIAIIGTG…GANSHAILES (439 aa)). Residues C181, H320, and H366 each act as for beta-ketoacyl synthase activity in the active site. Residues 557 to 877 (VFTGQGAQWA…SRGNSDVEAF (321 aa)) are acyl transferase. The N-terminal hotdog fold stretch occupies residues 944 to 1078 (NELLGRQVLD…CRLRITVGDS (135 aa)). The 303-residue stretch at 944-1246 (NELLGRQVLD…TQPLSSPTEA (303 aa)) folds into the PKS/mFAS DH domain. The interval 945–1243 (ELLGRQVLDG…GLQTQPLSSP (299 aa)) is dehydratase (DH) domain. H976 functions as the Proton acceptor; for dehydratase activity in the catalytic mechanism. The segment at 1093-1246 (LLEVESDRFY…TQPLSSPTEA (154 aa)) is C-terminal hotdog fold. D1154 serves as the catalytic Proton donor; for dehydratase activity. The interval 1400–1585 (RYTKYLAAMA…GIETAIPHHD (186 aa)) is methyltransferase (MT) domain. The tract at residues 2115–2288 (TYWLVGLTGG…NASAVHIGAI (174 aa)) is ketoreductase (KR)domain. The 82-residue stretch at 2394–2475 (SSSADIYDII…EMVTQAQELL (82 aa)) folds into the Carrier 1 domain. The segment at 2395 to 2472 (SSADIYDIIS…TVGEMVTQAQ (78 aa)) is peptidyl carrier protein. Position 2435 is an O-(pantetheine 4'-phosphoryl)serine (S2435). Disordered regions lie at residues 2476-2575 (PKEL…DPSR) and 2587-2630 (EKHL…SQII). Composition is skewed to polar residues over residues 2494 to 2512 (PKNT…QLQN) and 2520 to 2534 (ALSQ…NMIK). Residues 2537-2550 (PPKEAEAKQPRPEV) show a composition bias toward basic and acidic residues. Residues 2617–2627 (TSSSSSSTSAS) show a composition bias toward low complexity. Residues 2640–3069 (KSVPMAFGQS…NPALRLNVPP (430 aa)) form a condensation region. Residues 3102 to 3502 (EIVERYPTHV…EGNLILGGRI (401 aa)) are adenylation. Residues 3617–3697 (TDESPSMAKM…GMVSLIDHSE (81 aa)) enclose the Carrier 2 domain. Residues 3622–3694 (SMAKMRDVWA…SLTGMVSLID (73 aa)) form a thiolation region. S3657 carries the post-translational modification O-(pantetheine 4'-phosphoryl)serine. Residues 3735–3954 (LTGATGFLGR…DFVSADRVAM (220 aa)) are reductase-like.

This sequence in the C-terminal section; belongs to the NRP synthetase family.

It participates in mycotoxin biosynthesis. In terms of biological role, hybrid PKS-NRPS synthetase; part of the gene cluster that mediates the biosynthesis of the mycotoxins cytochalasins E and K. The hybrid PKS-NRPS synthetase ccsA and the enoyl reductase ccsC are responsible for fusion of phenylalanine with an octaketide backbone and subsequent release of the stable tetramic acid precursor. The polyketide synthase module (PKS) of the PKS-NRPS ccsA is responsible for the synthesis of the octaketide backbone. The downstream nonribosomal peptide synthetase (NRPS) amidates the carboxyl end of the octaketide with a phenylalanine. A reductase-like domain (R) at the C-terminus catalyzes the reductive release of the polyketide-amino acid intermediate. Because ccsA lacks a designated enoylreductase (ER) domain, the required activity is provided the enoyl reductase ccsC. Upon formation of the 11-membered carbocycle-fused perhydroisoindolone intermediate, a number of oxidative steps are required to afford the final cytochalasin E and K, including two hydroxylations at C17 and C18, one alcohol oxidation at C17, one epoxidation at C6 and C7 and two Baeyer-Villiger oxidations. The oxidative modification at C17, C18 and the C6-C7 epoxidation are likely to be catalyzed by the two cytochrome P450 oxygenases ccsD and ccsG. CcsD may be responsible for the epoxidation of the C6-C7 double bond. CcsG may be responsible for the successive oxidative modifications at C17 and C18. The double Baeyer-Villiger oxidations of ketocytochalasin to precytochalasin and cytochalasin Z(16) are among the final steps leading to cytochalasin E and K and are catalyzed by ccsB. The first oxygen insertion step follows that of the classic BVMO mechanism, generating the ester precytochalasin. Release of precytochalasin into an aqueous environment can generate the shunt product iso-precytochalasin through spontaneous isomerization. Alternatively, precytochalasin can undergo further oxidation by ccsB to yield the in-line carbonate-containing cytochalasin Z(16). Cytochalasin Z(16) is a precursor to cytochalasin E and cytochalasin K, whereas iso-precytochalasin is a precursor to cytochalasin Z(17) and rosellichalasin. The hydrolyase ccsE may catalyze hydrolysis of epoxide bond in cytochalasin E to afford cytochalasin K. The function of ccsF has not been assigned but it may play a role in post-PKS-NRPS biosynthetic step, resistance or transport of cytochalasins and related PKS-NRPS products. This is Polyketide synthase-nonribosomal peptide synthetase from Aspergillus clavatus (strain ATCC 1007 / CBS 513.65 / DSM 816 / NCTC 3887 / NRRL 1 / QM 1276 / 107).